The following is a 119-amino-acid chain: MPIDTNTEVKAIARYIRMSPFKVRRVLDQIRGISYREALIILEFMPYRSCVPIRKVLCSAVANAENNKGIDPDTLVISKAFADQGPCLPRYRPRAQGRAYKIRKPTCHITVAVASLVDD.

The protein belongs to the universal ribosomal protein uL22 family. Part of the 50S ribosomal subunit.

This protein binds specifically to 23S rRNA; its binding is stimulated by other ribosomal proteins, e.g. L4, L17, and L20. It is important during the early stages of 50S assembly. It makes multiple contacts with different domains of the 23S rRNA in the assembled 50S subunit and ribosome. Its function is as follows. The globular domain of the protein is located near the polypeptide exit tunnel on the outside of the subunit, while an extended beta-hairpin is found that lines the wall of the exit tunnel in the center of the 70S ribosome. This is Large ribosomal subunit protein uL22 from Trichodesmium erythraeum (strain IMS101).